We begin with the raw amino-acid sequence, 725 residues long: Glutamine-dependent NAD(+) synthetase (725 aa).

The CN hydrolase domain maps to Val5–Leu275. Glu45 serves as the catalytic Proton acceptor; for glutaminase activity. Lys114 serves as the catalytic For glutaminase activity. Cys175 acts as the Nucleophile; for glutaminase activity in catalysis. The ligase stretch occupies residues Tyr325–Ile706. Pro355–Ser362 is an ATP binding site. The active site involves Ser357.

This sequence in the C-terminal section; belongs to the NAD synthetase family. As to quaternary structure, homohexamer.

The catalysed reaction is deamido-NAD(+) + L-glutamine + ATP + H2O = L-glutamate + AMP + diphosphate + NAD(+) + H(+). It functions in the pathway cofactor biosynthesis; NAD(+) biosynthesis; NAD(+) from deamido-NAD(+) (L-Gln route): step 1/1. Catalyzes the final step of the nicotinamide adenine dinucleotide (NAD) de novo synthesis pathway, the ATP-dependent amidation of deamido-NAD using L-glutamine as a nitrogen source. The protein is Glutamine-dependent NAD(+) synthetase (Nadsyn1) of Rattus norvegicus (Rat).